Reading from the N-terminus, the 225-residue chain is Cytidylate kinase (225 aa).

11–19 (GPAAAGKST) is a binding site for ATP.

This sequence belongs to the cytidylate kinase family. Type 1 subfamily.

The protein localises to the cytoplasm. It catalyses the reaction CMP + ATP = CDP + ADP. The catalysed reaction is dCMP + ATP = dCDP + ADP. This is Cytidylate kinase from Bacillus cereus (strain G9842).